We begin with the raw amino-acid sequence, 404 residues long: Phosphopentomutase (404 aa).

Positions 10, 303, 308, 344, 345, and 356 each coordinate Mn(2+).

This sequence belongs to the phosphopentomutase family. Requires Mn(2+) as cofactor.

The protein resides in the cytoplasm. The catalysed reaction is 2-deoxy-alpha-D-ribose 1-phosphate = 2-deoxy-D-ribose 5-phosphate. It carries out the reaction alpha-D-ribose 1-phosphate = D-ribose 5-phosphate. It participates in carbohydrate degradation; 2-deoxy-D-ribose 1-phosphate degradation; D-glyceraldehyde 3-phosphate and acetaldehyde from 2-deoxy-alpha-D-ribose 1-phosphate: step 1/2. Functionally, isomerase that catalyzes the conversion of deoxy-ribose 1-phosphate (dRib-1-P) and ribose 1-phosphate (Rib-1-P) to deoxy-ribose 5-phosphate (dRib-5-P) and ribose 5-phosphate (Rib-5-P), respectively. The sequence is that of Phosphopentomutase from Shewanella baltica (strain OS155 / ATCC BAA-1091).